The sequence spans 320 residues: Probable cell division protein WhiA (320 aa).

The H-T-H motif DNA-binding region spans 276–310 (TLKELGEMVAGGKISKSGINHRLRKIDEIAERLRA).

It belongs to the WhiA family.

Involved in cell division and chromosome segregation. The sequence is that of Probable cell division protein WhiA from Geobacillus thermodenitrificans (strain NG80-2).